The primary structure comprises 117 residues: Large ribosomal subunit protein uL18 (117 aa).

It belongs to the universal ribosomal protein uL18 family. In terms of assembly, part of the 50S ribosomal subunit; part of the 5S rRNA/L5/L18/L25 subcomplex. Contacts the 5S and 23S rRNAs.

Functionally, this is one of the proteins that bind and probably mediate the attachment of the 5S RNA into the large ribosomal subunit, where it forms part of the central protuberance. The sequence is that of Large ribosomal subunit protein uL18 from Laribacter hongkongensis (strain HLHK9).